A 367-amino-acid chain; its full sequence is Probable dual-specificity RNA methyltransferase RlmN (367 aa).

Catalysis depends on Glu-92, which acts as the Proton acceptor. Positions 98–326 constitute a Radical SAM core domain; the sequence is QEYGLSVCVT…YDTLKKNGIN (229 aa). A disulfide bridge connects residues Cys-105 and Cys-341. Positions 112, 116, and 119 each coordinate [4Fe-4S] cluster. S-adenosyl-L-methionine-binding positions include 164–165, Ser-196, 219–221, and Asn-297; these read GE and SLH. Catalysis depends on Cys-341, which acts as the S-methylcysteine intermediate.

This sequence belongs to the radical SAM superfamily. RlmN family. The cofactor is [4Fe-4S] cluster.

The protein localises to the cytoplasm. It catalyses the reaction adenosine(2503) in 23S rRNA + 2 reduced [2Fe-2S]-[ferredoxin] + 2 S-adenosyl-L-methionine = 2-methyladenosine(2503) in 23S rRNA + 5'-deoxyadenosine + L-methionine + 2 oxidized [2Fe-2S]-[ferredoxin] + S-adenosyl-L-homocysteine. The catalysed reaction is adenosine(37) in tRNA + 2 reduced [2Fe-2S]-[ferredoxin] + 2 S-adenosyl-L-methionine = 2-methyladenosine(37) in tRNA + 5'-deoxyadenosine + L-methionine + 2 oxidized [2Fe-2S]-[ferredoxin] + S-adenosyl-L-homocysteine. Its function is as follows. Specifically methylates position 2 of adenine 2503 in 23S rRNA and position 2 of adenine 37 in tRNAs. This chain is Probable dual-specificity RNA methyltransferase RlmN, found in Listeria innocua serovar 6a (strain ATCC BAA-680 / CLIP 11262).